Consider the following 269-residue polypeptide: MSAALFSLDGPARGAPWPAEPAPFYEPGRAGKPGRGAEPGALGEPGAAAPAMYDDESAIDFSAYIDSMAAVPTLELCHDELFADLFNSNHKAGGAGPLELLPGGPARPLGPGPAAPRLLKREPDWGDGDAPGSLLPAQVAACAQTVVSLAAAGQPTPPTSPEPPRSSPRQTPAPGPAREKSAGKRGPDRGSPEYRQRRERNNIAVRKSRDKAKRRNQEMQQKLVELSAENEKLHQRVEQLTRDLAGLRQFFKQLPSPPFLPAAGTADCR.

Disordered regions lie at residues Met1–Ala48, Pro97–Ser133, and Ala151–Met219. The residue at position 2 (Ser2) is an N-acetylserine. Composition is skewed to low complexity over residues Gly36–Ala48 and Pro97–Arg107. Lys120 is covalently cross-linked (Glycyl lysine isopeptide (Lys-Gly) (interchain with G-Cter in SUMO)). Residues Pro155 to Gly175 show a composition bias toward pro residues. The segment covering Ala177–Asn201 has biased composition (basic and acidic residues). The region spanning Ser191–Leu254 is the bZIP domain. Residues Arg195 to Lys222 form a basic motif region. The leucine-zipper stretch occupies residues Leu226–Leu254.

Belongs to the bZIP family. C/EBP subfamily. As to quaternary structure, binds DNA as a homodimer and as a heterodimer. Can form stable heterodimers with CEBPB. Can form stable heterodimers with CEBPA and CEBPE. Directly interacts with SPI1/PU.1; this interaction does not affect DNA-binding properties of each partner. Interacts with PRDM16.

Its subcellular location is the nucleus. Functionally, transcription activator that recognizes two different DNA motifs: the CCAAT homology common to many promoters and the enhanced core homology common to many enhancers. Important transcription factor regulating the expression of genes involved in immune and inflammatory responses. Transcriptional activator that enhances IL6 transcription alone and as heterodimer with CEBPB. The protein is CCAAT/enhancer-binding protein delta (CEBPD) of Homo sapiens (Human).